The sequence spans 162 residues: Cyanate hydratase (162 aa).

Residues R103, E106, and S129 contribute to the active site.

The protein belongs to the cyanase family.

The catalysed reaction is cyanate + hydrogencarbonate + 3 H(+) = NH4(+) + 2 CO2. In terms of biological role, catalyzes the reaction of cyanate with bicarbonate to produce ammonia and carbon dioxide. This Phaeosphaeria nodorum (strain SN15 / ATCC MYA-4574 / FGSC 10173) (Glume blotch fungus) protein is Cyanate hydratase.